Reading from the N-terminus, the 316-residue chain is Cytochrome c biogenesis protein CcsA (316 aa).

The next 8 membrane-spanning stretches (helical) occupy residues 9-29 (IFVNISFVMFFFVTLLNLINL), 39-61 (FSKNSMTIAFFCTTGFLITRYLQ), 70-90 (LYESLMFLSWGFSLLYLILEV), 94-114 (IGLSHAVLAPGAMLIHAFATL), 143-163 (LISYITLLCGSLLAITLLSLF), 224-244 (TISLGFSLLTIGILSGAVWAN), 257-271 (ETWALVTWLVYAIYL), and 289-309 (SMGFFLVWICFLGVNLLGVGL).

Belongs to the CcmF/CycK/Ccl1/NrfE/CcsA family. As to quaternary structure, may interact with Ccs1.

It localises to the plastid. Its subcellular location is the chloroplast thylakoid membrane. Its function is as follows. Required during biogenesis of c-type cytochromes (cytochrome c6 and cytochrome f) at the step of heme attachment. This chain is Cytochrome c biogenesis protein CcsA, found in Adiantum capillus-veneris (Maidenhair fern).